The primary structure comprises 171 residues: Protein GrpE (171 aa).

The segment at 1 to 20 (MNEEKEESPSTEAEGAGAEV) is disordered.

It belongs to the GrpE family. In terms of assembly, homodimer.

Its subcellular location is the cytoplasm. Functionally, participates actively in the response to hyperosmotic and heat shock by preventing the aggregation of stress-denatured proteins, in association with DnaK and GrpE. It is the nucleotide exchange factor for DnaK and may function as a thermosensor. Unfolded proteins bind initially to DnaJ; upon interaction with the DnaJ-bound protein, DnaK hydrolyzes its bound ATP, resulting in the formation of a stable complex. GrpE releases ADP from DnaK; ATP binding to DnaK triggers the release of the substrate protein, thus completing the reaction cycle. Several rounds of ATP-dependent interactions between DnaJ, DnaK and GrpE are required for fully efficient folding. The protein is Protein GrpE of Acidithiobacillus ferrooxidans (strain ATCC 23270 / DSM 14882 / CIP 104768 / NCIMB 8455) (Ferrobacillus ferrooxidans (strain ATCC 23270)).